Here is a 252-residue protein sequence, read N- to C-terminus: Autophagy-related protein 27 (252 aa).

The signal sequence occupies residues 1-15; the sequence is MILASLLTFATAALA. The MRH domain occupies 16–161; it reads FDCSDKELER…SMKTKAACIT (146 aa). Over 16–176 the chain is Lumenal; that stretch reads FDCSDKELER…KKEKHDNGES (161 aa). 3 cysteine pairs are disulfide-bonded: cysteine 18/cysteine 57, cysteine 66/cysteine 73, and cysteine 130/cysteine 159. Asparagine 49 carries an N-linked (GlcNAc...) asparagine glycan. A helical transmembrane segment spans residues 177–197; that stretch reads WGWFTWIFIFLVLFLSIYIIG. The Cytoplasmic segment spans residues 198–252; it reads GAWFQYNKGNAIDFQSALKEVVENFIELLKGLPSFGKEIIEKFTGRSNRGEYSAV.

The protein belongs to the ATG27 family.

It is found in the cytoplasmic vesicle membrane. The protein localises to the golgi apparatus membrane. The protein resides in the mitochondrion membrane. It localises to the preautophagosomal structure membrane. In terms of biological role, plays a key role in autophagy. Effector of VPS34 phosphatidylinositol 3-phosphate kinase signaling. Regulates the cytoplasm to vacuole transport (Cvt) vesicle formation. Plays a role in ATG protein retrieval from the pre-autophagosomal structure (PAS) and is especially required for autophagy-dependent cycling of ATG9. Finally, plays an important role in biofilm formation and resistance to antifungal compounds such as fluconazole, itraconazole, terbinafine and caspofungin. The chain is Autophagy-related protein 27 from Candida albicans (strain SC5314 / ATCC MYA-2876) (Yeast).